The following is a 156-amino-acid chain: Large ribosomal subunit protein uL22 (156 aa).

This sequence belongs to the universal ribosomal protein uL22 family. Part of the 50S ribosomal subunit.

This protein binds specifically to 23S rRNA. It makes multiple contacts with different domains of the 23S rRNA in the assembled 50S subunit and ribosome. In terms of biological role, the globular domain of the protein is located near the polypeptide exit tunnel on the outside of the subunit, while an extended beta-hairpin is found that lines the wall of the exit tunnel in the center of the 70S ribosome. This chain is Large ribosomal subunit protein uL22, found in Sulfurisphaera tokodaii (strain DSM 16993 / JCM 10545 / NBRC 100140 / 7) (Sulfolobus tokodaii).